Reading from the N-terminus, the 120-residue chain is MGHGVEGRNRPSAPLDSQAAAQVASTLQALATPSRLMILTQLRNGPLPVTDLAEAIGMEQSAVSHQLRVLRNLGLVVGDRAGRSIVYSLYDTHVAQLLDEAIYHSEHLHLGLSDRHPSAG.

Residues 15-109 (LDSQAAAQVA…EAIYHSEHLH (95 aa)) enclose the HTH arsR-type domain. The segment at residues 49–72 (VTDLAEAIGMEQSAVSHQLRVLRN) is a DNA-binding region (H-T-H motif). Ni(2+)-binding residues include Asp-91, His-93, His-104, and His-107.

Homodimer.

Binding to DNA is inhibited by nickel and, to some extent, cobalt ions. Its function is as follows. Represses transcription of ctpJ/nmtA, by binding to its promoter region. This is HTH-type transcriptional regulator NmtR (nmtR) from Mycobacterium tuberculosis (strain ATCC 25618 / H37Rv).